Reading from the N-terminus, the 179-residue chain is Negative modulator of initiation of replication (179 aa).

It belongs to the SeqA family. Homodimer. Polymerizes to form helical filaments.

Its subcellular location is the cytoplasm. Its function is as follows. Negative regulator of replication initiation, which contributes to regulation of DNA replication and ensures that replication initiation occurs exactly once per chromosome per cell cycle. Binds to pairs of hemimethylated GATC sequences in the oriC region, thus preventing assembly of replication proteins and re-initiation at newly replicated origins. Repression is relieved when the region becomes fully methylated. The protein is Negative modulator of initiation of replication of Vibrio atlanticus (strain LGP32) (Vibrio splendidus (strain Mel32)).